Consider the following 827-residue polypeptide: Villin-1 (827 aa).

The segment at methionine 1 to methionine 126 is necessary for homodimerization. The tract at residues methionine 1–asparagine 734 is core. A Gelsolin-like 1 repeat occupies methionine 27–glycine 76. 2 LPA/PIP2-binding site regions span residues lysine 112–lysine 119 and arginine 138–arginine 146. Gelsolin-like repeat units lie at residues valine 148–leucine 188 and leucine 265–serine 309. Residue serine 366 is modified to Phosphoserine. 3 Gelsolin-like repeats span residues aspartate 407–alanine 457, threonine 528–glutamate 568, and phenylalanine 631–lysine 672. Phosphoserine occurs at positions 735 and 776. Residues serine 735–phenylalanine 827 form a headpiece region. Positions serine 761 to phenylalanine 827 constitute an HP domain. Residues lysine 816–lysine 824 are LPA/PIP2-binding site 3.

This sequence belongs to the villin/gelsolin family. In terms of assembly, monomer. Homodimer; homodimerization is necessary for actin-bundling. Associates with F-actin; phosphorylation at tyrosine residues decreases the association with F-actin. Interacts (phosphorylated at C-terminus tyrosine phosphorylation sites) with PLCG1 (via the SH2 domains). Interacts (phosphorylated form) with PLCG1; the interaction is enhanced by hepatocyte growth factor (HGF). Post-translationally, phosphorylated on tyrosine residues by SRC. The unphosphorylated form increases the initial rate of actin-nucleating activity, whereas the tyrosine phosphorylated form inhibits actin-nucleating activity, enhances actin-bundling activity and enhances actin-severing activity by reducing high Ca(2+) requirements. The tyrosine phosphorylated form does not regulate actin-capping activity. Tyrosine phosphorylation is essential for cell migration: tyrosine phosphorylation sites in the N-terminus half regulate actin reorganization and cell morphology, whereas tyrosine phosphorylation sites in the C-terminus half regulate cell migration via interaction with PLCG1. Tyrosine phosphorylation is induced by epidermal growth factor (EGF) and stimulates cell migration. As to expression, expressed in small intestin, colon, kidney and enterocytes (at protein level).

It localises to the cytoplasm. It is found in the cytoskeleton. Its subcellular location is the cell projection. The protein resides in the microvillus. The protein localises to the lamellipodium. It localises to the ruffle. It is found in the filopodium tip. Its subcellular location is the filopodium. Epithelial cell-specific Ca(2+)-regulated actin-modifying protein that modulates the reorganization of microvillar actin filaments. Plays a role in the actin nucleation, actin filament bundle assembly, actin filament capping and severing. Binds phosphatidylinositol 4,5-bisphosphate (PIP2) and lysophosphatidic acid (LPA); binds LPA with higher affinity than PIP2. Binding to LPA increases its phosphorylation by SRC and inhibits all actin-modifying activities. Binding to PIP2 inhibits actin-capping and -severing activities but enhances actin-bundling activity. Regulates the intestinal epithelial cell morphology, cell invasion, cell migration and apoptosis. Protects against apoptosis induced by dextran sodium sulfate (DSS) in the gastrointestinal epithelium. Appears to regulate cell death by maintaining mitochondrial integrity. Enhances hepatocyte growth factor (HGF)-induced epithelial cell motility, chemotaxis and wound repair. Upon S.flexneri cell infection, its actin-severing activity enhances actin-based motility of the bacteria and plays a role during the dissemination. This is Villin-1 (Vil1) from Mus musculus (Mouse).